A 252-amino-acid chain; its full sequence is DNA-(apurinic or apyrimidinic site) lyase Nei2 (252 aa).

P2 serves as the catalytic Schiff-base intermediate with DNA. The active-site Proton donor is E3. K51 acts as the Proton donor (in beta-elimination) in catalysis. Residues 216-250 (WVYGRAGEPCRRCGTLIQTDRGGERVTYWCPVCQT) form an FPG-type zinc finger. Zn(2+) is bound by residues C225, C228, C245, and C248.

The protein belongs to the FPG family. In terms of assembly, monomer. Zn(2+) is required as a cofactor.

It carries out the reaction 2'-deoxyribonucleotide-(2'-deoxyribose 5'-phosphate)-2'-deoxyribonucleotide-DNA = a 3'-end 2'-deoxyribonucleotide-(2,3-dehydro-2,3-deoxyribose 5'-phosphate)-DNA + a 5'-end 5'-phospho-2'-deoxyribonucleoside-DNA + H(+). Involved in base excision repair of DNA damaged by oxidation or by mutagenic agents. Acts as DNA glycosylase that recognizes and removes damaged bases. Its function is as follows. Involved in the repair of psoralen-UVA DNA cross-links. A lyase that cleaves single-stranded (ss)DNA but not double-stranded (ds)DNA with an abasic site. Has 5-hydroxyuracil (5-OH-U) glycosylase activity on ssDNA with 5-OH-U, with 10-fold less activity on dsDNA, but weak to no uracil glycosylase activity. Has weak glycosylase activity on thymine glycol and dihydrothymine residues in ssDNA. Cleaves the DNA backbone by beta-delta elimination to generate a single-strand break at the site of the removed base with both 3'- and 5'-phosphates. The sequence is that of DNA-(apurinic or apyrimidinic site) lyase Nei2 from Mycolicibacterium smegmatis (strain ATCC 700084 / mc(2)155) (Mycobacterium smegmatis).